Reading from the N-terminus, the 460-residue chain is MARTVVVGLGRSGIGAARLLQAEGHQVTVLERSIEPHLQSLAADLRLQGIAVELGKPLELNSFIPLLDQLDAVVISPGIAWDHPTLTALRQRGIDIDGEMAVAWRSLSHLPWIAITGTNGKTTVTHLLNHVLESNGLRAPMGGNVGHAAAEVALKWRQPNAQRPDWLVMELSSYQIEAAPEIAPRMGIWTNLTPDHLERHGTLDAYRTIKRGLLERSEIRIFNGDDPDLRSQRSSWDKGLWVSSEGPGTANHRADFWIDAEGLVREPQGALFAASALAMPGQHNLQNLLLVTAAARQTGLPAKAIEASLRSFPGVPHRLEQLGHIQQMSVYNDSKATNYDAACVGLKAVPPPAVVLAGGQTKQGDASGWLKQLDQNACAVILFGAGASELQELIKTSGFSGELHCCSNLNAAVTLAIPLGVERQAACLLLSPACASFDQYQDFEARGEHFRSLISSHLTA.

117–123 (GTNGKTT) contacts ATP.

The protein belongs to the MurCDEF family.

The protein resides in the cytoplasm. The catalysed reaction is UDP-N-acetyl-alpha-D-muramoyl-L-alanine + D-glutamate + ATP = UDP-N-acetyl-alpha-D-muramoyl-L-alanyl-D-glutamate + ADP + phosphate + H(+). It functions in the pathway cell wall biogenesis; peptidoglycan biosynthesis. In terms of biological role, cell wall formation. Catalyzes the addition of glutamate to the nucleotide precursor UDP-N-acetylmuramoyl-L-alanine (UMA). This Prochlorococcus marinus (strain MIT 9313) protein is UDP-N-acetylmuramoylalanine--D-glutamate ligase.